The primary structure comprises 72 residues: Translation initiation factor IF-1 (72 aa).

An S1-like domain is found at 1–72 (MAKEENIEMQ…SKGRIIFRAR (72 aa)).

This sequence belongs to the IF-1 family. In terms of assembly, component of the 30S ribosomal translation pre-initiation complex which assembles on the 30S ribosome in the order IF-2 and IF-3, IF-1 and N-formylmethionyl-tRNA(fMet); mRNA recruitment can occur at any time during PIC assembly.

It is found in the cytoplasm. One of the essential components for the initiation of protein synthesis. Stabilizes the binding of IF-2 and IF-3 on the 30S subunit to which N-formylmethionyl-tRNA(fMet) subsequently binds. Helps modulate mRNA selection, yielding the 30S pre-initiation complex (PIC). Upon addition of the 50S ribosomal subunit IF-1, IF-2 and IF-3 are released leaving the mature 70S translation initiation complex. The polypeptide is Translation initiation factor IF-1 (Colwellia psychrerythraea (strain 34H / ATCC BAA-681) (Vibrio psychroerythus)).